Consider the following 504-residue polypeptide: 26S proteasome non-ATPase regulatory subunit 5 (504 aa).

The residue at position 2 (alanine 2) is an N-acetylalanine.

This sequence belongs to the proteasome subunit S5B/HSM3 family. As to quaternary structure, interacts with PSMC1, PSMC2, PSMD1 and PSMD6. Part of transient complex containing PSMD5, PSMC2, PSMC1 and PSMD2 formed during the assembly of the 26S proteasome.

Its function is as follows. Acts as a chaperone during the assembly of the 26S proteasome, specifically of the base subcomplex of the PA700/19S regulatory complex (RC). In the initial step of the base subcomplex assembly is part of an intermediate PSMD5:PSMC2:PSMC1:PSMD2 module which probably assembles with a PSMD10:PSMC4:PSMC5:PAAF1 module followed by dissociation of PSMD5. The chain is 26S proteasome non-ATPase regulatory subunit 5 (PSMD5) from Homo sapiens (Human).